A 508-amino-acid polypeptide reads, in one-letter code: Glutamyl-tRNA(Gln) amidotransferase subunit B, mitochondrial (508 aa).

The protein belongs to the GatB/GatE family. GatB subfamily. Subunit of the heterotrimeric GatFAB amidotransferase (AdT) complex, composed of A, B and F subunits.

It is found in the mitochondrion. The enzyme catalyses L-glutamyl-tRNA(Gln) + L-glutamine + ATP + H2O = L-glutaminyl-tRNA(Gln) + L-glutamate + ADP + phosphate + H(+). Its function is as follows. Allows the formation of correctly charged Gln-tRNA(Gln) through the transamidation of misacylated Glu-tRNA(Gln) in the mitochondria. The reaction takes place in the presence of glutamine and ATP through an activated gamma-phospho-Glu-tRNA(Gln). This chain is Glutamyl-tRNA(Gln) amidotransferase subunit B, mitochondrial, found in Scheffersomyces stipitis (strain ATCC 58785 / CBS 6054 / NBRC 10063 / NRRL Y-11545) (Yeast).